The chain runs to 381 residues: Anti-sigma-I factor RsgI (381 aa).

At 1–63 the chain is on the cytoplasmic side; it reads MRRGIIVEKN…FDFFKLRPFK (63 aa). The region spanning 2–50 is the RsgI N-terminal anti-sigma domain; that stretch reads RRGIIVEKNKKFVTLLTPDGQFLKAKNDRHSYEIGEEIMLPSETRMGRR. A helical membrane pass occupies residues 64-84; the sequence is MGIFTMTAIMLFIFIVLPVFS. Residues 85–381 lie on the Extracellular side of the membrane; sequence NNKAYAYMTI…NEDSPSAPGE (297 aa). A disordered region spans residues 198 to 381; it reads SDMQTREKAK…NEDSPSAPGE (184 aa). Basic and acidic residues-rich tracts occupy residues 200–210, 219–244, 273–321, and 349–359; these read MQTREKAKKEG, SNEK…QKSD, GDQK…DKGN, and SRRDNASDRRN.

Interacts (via RsgI N-terminal anti-sigma domain) with SigI.

It is found in the cell membrane. Anti-sigma factor for SigI. Negatively regulates SigI activity through direct interaction. The protein is Anti-sigma-I factor RsgI of Bacillus subtilis (strain 168).